Reading from the N-terminus, the 154-residue chain is Aspartate carbamoyltransferase regulatory chain (154 aa).

Residues C109, C114, C138, and C141 each coordinate Zn(2+).

Belongs to the PyrI family. Contains catalytic and regulatory chains. Requires Zn(2+) as cofactor.

Involved in allosteric regulation of aspartate carbamoyltransferase. The sequence is that of Aspartate carbamoyltransferase regulatory chain from Serratia proteamaculans (strain 568).